The following is a 960-amino-acid chain: Isoleucine--tRNA ligase (960 aa).

The 'HIGH' region motif lies at 60–70 (PYANGSLHIGH). Glu573 serves as a coordination point for L-isoleucyl-5'-AMP. Positions 614–618 (KMSKS) match the 'KMSKS' region motif. Position 617 (Lys617) interacts with ATP. Residues Cys929, Cys932, Cys949, and Cys952 each coordinate Zn(2+).

This sequence belongs to the class-I aminoacyl-tRNA synthetase family. IleS type 1 subfamily. Monomer. Requires Zn(2+) as cofactor.

It localises to the cytoplasm. The enzyme catalyses tRNA(Ile) + L-isoleucine + ATP = L-isoleucyl-tRNA(Ile) + AMP + diphosphate. Its function is as follows. Catalyzes the attachment of isoleucine to tRNA(Ile). As IleRS can inadvertently accommodate and process structurally similar amino acids such as valine, to avoid such errors it has two additional distinct tRNA(Ile)-dependent editing activities. One activity is designated as 'pretransfer' editing and involves the hydrolysis of activated Val-AMP. The other activity is designated 'posttransfer' editing and involves deacylation of mischarged Val-tRNA(Ile). The sequence is that of Isoleucine--tRNA ligase from Nostoc sp. (strain PCC 7120 / SAG 25.82 / UTEX 2576).